Reading from the N-terminus, the 306-residue chain is MTASLHIILDTDPGIDDAAAIAAALFAPQLDLQLITTVAGNVSVEKTTRNALQLLHFWNSDIPLAQGAATPLLRPLRDAAYVHGESGMEGYDFVDHQRQPLAKPAFIAIRDVLMNAPEPMTLVAIGPLTNIALLLMHYPECACNIHRLVLMGGSAGRGNFTPNAEFNIAVDPEAAALVFRSGLEIVMCGLDVTNQAMLSPDFLNKLPALNRTGKMLHSLFNHYRSGSMRTGVRMHDLCAIAWLVRPELFTLQSCFVAVETQGQYTAGTTVVDIEGRLGQPANAQVALALDVDGFRQWVAEVFAYAP.

His-235 is an active-site residue.

The protein belongs to the IUNH family. RihC subfamily.

Its function is as follows. Hydrolyzes both purine and pyrimidine ribonucleosides with a broad-substrate specificity. The sequence is that of Non-specific ribonucleoside hydrolase RihC from Salmonella paratyphi B (strain ATCC BAA-1250 / SPB7).